A 233-amino-acid polypeptide reads, in one-letter code: uncharacterized protein (233 aa).

The protein belongs to the asfivirus H233R family.

This is an uncharacterized protein from African swine fever virus (strain Badajoz 1971 Vero-adapted) (Ba71V).